Consider the following 88-residue polypeptide: Small ribosomal subunit protein bS20 (88 aa).

Residues 1–27 (MANTKQAQKRARQAEQRRQHNASQRSM) are disordered.

It belongs to the bacterial ribosomal protein bS20 family.

Binds directly to 16S ribosomal RNA. The sequence is that of Small ribosomal subunit protein bS20 from Chromohalobacter salexigens (strain ATCC BAA-138 / DSM 3043 / CIP 106854 / NCIMB 13768 / 1H11).